A 360-amino-acid chain; its full sequence is Photosystem II protein D1 (360 aa).

A run of 3 helical transmembrane segments spans residues 32 to 49, 121 to 136, and 145 to 159; these read YLGWFGCLMVPTLVSATF, HFFIGVCSYLGREWEL, and WIFVAFSAPVAAASA. Residue histidine 121 participates in chlorophyll a binding. Tyrosine 129 lines the pheophytin a pocket. [CaMn4O5] cluster is bound by residues aspartate 173 and glutamate 192. A helical membrane pass occupies residues 200 to 221; that stretch reads LHMFGVAAVFGGSLFSAMHGSL. Histidine 201 serves as a coordination point for chlorophyll a. A quinone contacts are provided by residues histidine 218 and 267 to 268; that span reads SF. Position 218 (histidine 218) interacts with Fe cation. Histidine 275 contacts Fe cation. A helical membrane pass occupies residues 277 to 291; that stretch reads FLGAWPVVGIWLTAM. The [CaMn4O5] cluster site is built by histidine 335, glutamate 336, aspartate 345, and alanine 347. The propeptide occupies 348–360; that stretch reads CANCLLSLWPMVG.

This sequence belongs to the reaction center PufL/M/PsbA/D family. As to quaternary structure, PSII is composed of 1 copy each of membrane proteins PsbA, PsbB, PsbC, PsbD, PsbE, PsbF, PsbH, PsbI, PsbJ, PsbK, PsbL, PsbM, PsbT, PsbX, PsbY, PsbZ, Psb30/Ycf12, at least 3 peripheral proteins of the oxygen-evolving complex and a large number of cofactors. It forms dimeric complexes. The cofactor is The D1/D2 heterodimer binds P680, chlorophylls that are the primary electron donor of PSII, and subsequent electron acceptors. It shares a non-heme iron and each subunit binds pheophytin, quinone, additional chlorophylls, carotenoids and lipids. D1 provides most of the ligands for the Mn4-Ca-O5 cluster of the oxygen-evolving complex (OEC). There is also a Cl(-1) ion associated with D1 and D2, which is required for oxygen evolution. The PSII complex binds additional chlorophylls, carotenoids and specific lipids.. Post-translationally, tyr-164 forms a radical intermediate that is referred to as redox-active TyrZ, YZ or Y-Z. C-terminally processed by CtpA; processing is essential to allow assembly of the oxygen-evolving complex and thus photosynthetic growth.

Its subcellular location is the plastid. The protein resides in the chloroplast thylakoid membrane. It catalyses the reaction 2 a plastoquinone + 4 hnu + 2 H2O = 2 a plastoquinol + O2. Photosystem II (PSII) is a light-driven water:plastoquinone oxidoreductase that uses light energy to abstract electrons from H(2)O, generating O(2) and a proton gradient subsequently used for ATP formation. It consists of a core antenna complex that captures photons, and an electron transfer chain that converts photonic excitation into a charge separation. The D1/D2 (PsbA/PsbD) reaction center heterodimer binds P680, the primary electron donor of PSII as well as several subsequent electron acceptors. This is Photosystem II protein D1 from Karenia mikimotoi (Red tide dinoflagellate).